Here is a 152-residue protein sequence, read N- to C-terminus: Transcriptional regulator MraZ (152 aa).

SpoVT-AbrB domains are found at residues 5–52 and 81–124; these read ASAV…PLNQ and ATEC…SESE.

This sequence belongs to the MraZ family. In terms of assembly, forms oligomers.

The protein resides in the cytoplasm. Its subcellular location is the nucleoid. This Histophilus somni (strain 2336) (Haemophilus somnus) protein is Transcriptional regulator MraZ.